Consider the following 332-residue polypeptide: Ribosomal RNA small subunit methyltransferase C (332 aa).

This sequence belongs to the methyltransferase superfamily. RsmC family. As to quaternary structure, monomer.

The protein resides in the cytoplasm. The catalysed reaction is guanosine(1207) in 16S rRNA + S-adenosyl-L-methionine = N(2)-methylguanosine(1207) in 16S rRNA + S-adenosyl-L-homocysteine + H(+). Its function is as follows. Specifically methylates the guanine in position 1207 of 16S rRNA in the 30S particle. The polypeptide is Ribosomal RNA small subunit methyltransferase C (Pseudomonas fluorescens (strain ATCC BAA-477 / NRRL B-23932 / Pf-5)).